Reading from the N-terminus, the 1289-residue chain is MAILNELYPSVPYNVLAYTPPSFLPDAGTQATPADLTAYEQLLKNLEKGINAGTYSKAIADVLKGIFIDDTINYQTYVNIGLSLITLAVPEIGIFTPFIGLFFAALNKHDAPPPPNAKDIFEAMKPAIQEMIDRTLTADEQTFLNGEISGLQNLAARYQSTMDDIQSHGGFNKVDSGLIKKFTDEVLSLNSFYTDRLPVFITDNTADRTLLGLPYYAILASMHLMLLRDIITKGPTWDSKINFTPDAIDSFKTDIKNNIKLYSKTIYDVFQKGLASYGTPSDLESFAKKQKYIEIMTTHCLDFARLFPTFDPDLYPTGSGDISLQKTRRILSPFIPIRTADGLTLNNTSIDTSNWPNYENGNGAFPNPKERILKQFKLYPSWRAAQYGGLLQPYLWAIEVQDSVETRLYGQLPAVDPQAGPNYVSIDSSNPIIQINMDTWKTPPQGASGWNTNLMRGSVSGLSFLQRDGTRLSAGMGGGFADTIYSLPATHYLSYLYGTPYQTSDNYSGHVGALVGVSTPQEATLPNIIGQPDEQGNVSTMGFPFEKASYGGTVVKEWLNGANAMKLSPGQSIGIPITNVTSGEYQIRCRYASNDNTNVFFNVDTGGANPIFQQINFASTVDNNTGVQGANGVYVVKSIATTDNSFTVKIPAKTINVHLTNQGSSDVFLDRIEFVPILESNTVTIFNNSYTTGSANLIPAIAPLWSTSSDKALTGSMSITGRTTPNSDDALLRFFKTNYDTQTIPIPGSGKDFTNTLEIQDIVSIDIFVGSGLHGSDGSIKLDFTNNNSGSGGSPKSFTEQNDLENITTQVNALFTSNTQDALATDVSDHDIEEVVLKVDALSDEVFGKEKKTLRKFVNQAKRLSKARNLLVGGNFDNLDAWYRGRNVVNVSNHELLKSDHVLLPPPGLSPSYIFQKVEESKLKRNTRYTVSGFIAHATDLEIVVSRYGQEIKKVVQVPYGEAFPLTSSGPVCCIPHSTSNGTLGNPHFFSYSIDVGALDVDTNPGIEFGLRIVNPTGMARVSNLEIREDRPLAANEIRQVQRVARNWRTEYEKERAEVTSLIQPVINRINGLYDNGNWNGSIRSDISYQNIDAIVLPTLPKLRHWFMSDRFSEQGDIMAKFQGALNRAYAQLEQNTLLHNGHFTKDAANWTVEGDAHQVVLEDGKRVLRLPDWSSSVSQTIEIENFDPDKEYQLVFHGQGEGTVTLEHGEETKYIETHTHHFANFTTSQRQGLTFESNKVTVTISSEDGEFLVDNIALVEAPLPTDDQNSEGNTASSTNSDTSMNNNQ.

Residues 1263 to 1289 (PLPTDDQNSEGNTASSTNSDTSMNNNQ) form a disordered region. Over residues 1274-1289 (NTASSTNSDTSMNNNQ) the composition is skewed to low complexity.

This sequence belongs to the delta endotoxin family.

Endotoxin with nematicidal activity. This is Pesticidal crystal protein Cry5Ab (cry5Ab) from Bacillus thuringiensis subsp. darmstadiensis.